A 205-amino-acid chain; its full sequence is Recombination protein RecR (205 aa).

The segment at 64–79 (CRRCFNITVDELCPIC) adopts a C4-type zinc-finger fold. The 96-residue stretch at 87 to 182 (TKICVVEEPL…RVTRPARGLP (96 aa)) folds into the Toprim domain.

The protein belongs to the RecR family.

Functionally, may play a role in DNA repair. It seems to be involved in an RecBC-independent recombinational process of DNA repair. It may act with RecF and RecO. The protein is Recombination protein RecR of Chloroflexus aggregans (strain MD-66 / DSM 9485).